The following is a 376-amino-acid chain: MDILWFIPTHGDGRYLGTNTGGRAADHTYFQQVAQAADRLGYTGVLLPTGRSCEDPWITAAALASVTKNLKFLVAVRPGLMQPSVAARMASTFDRLAEGRLLINVVAGGDPYELAGDGLFISHDERYEATNEFLDIWRSLLKGETVSYSGKHLKTENGRLLFPPAQQPHPPIYFGGSSKAGQETAAKHADVYLTWGEPPHLVKEKIQSVKKKAEKEGRTVRFGIRLHVIVRETEKEAWQAADRLISRLEDETIAAAQNAMKRMDSSGQKRMVQLHQGNRSNLEISPNLWAGIGLVRGGAGTALVGDPETVASRIKEYADIGIESFIFSGYPHLEEAYHFAEKVFPLLPFRTKLQSKASGEVIGNDHFPSRQKEKTV.

The protein belongs to the SsuD family.

It catalyses the reaction an alkanesulfonate + FMNH2 + O2 = an aldehyde + FMN + sulfite + H2O + 2 H(+). Its function is as follows. Catalyzes the desulfonation of aliphatic sulfonates. The protein is Alkanesulfonate monooxygenase of Bacillus licheniformis (strain ATCC 14580 / DSM 13 / JCM 2505 / CCUG 7422 / NBRC 12200 / NCIMB 9375 / NCTC 10341 / NRRL NRS-1264 / Gibson 46).